Here is a 160-residue protein sequence, read N- to C-terminus: uncharacterized protein (160 aa).

The signal sequence occupies residues 1-23; that stretch reads MSIPHSVFSALLVFVALATTTLA. Over 24–132 the chain is Cytoplasmic; sequence STEACLPTNK…DPNTAYWSSD (109 aa). A helical membrane pass occupies residues 133–155; that stretch reads LFGFYTTPTNVTVEMTGYLIWSM. The Extracellular portion of the chain corresponds to 156–160; that stretch reads GNRRR.

To yeast protein FLO1.

The protein resides in the cell membrane. This is an uncharacterized protein from Saccharomyces cerevisiae (strain ATCC 204508 / S288c) (Baker's yeast).